The primary structure comprises 452 residues: 1-aminocyclopropane-1-carboxylate synthase 3 (452 aa).

N6-(pyridoxal phosphate)lysine is present on Lys283.

The protein belongs to the class-I pyridoxal-phosphate-dependent aminotransferase family. Pyridoxal 5'-phosphate is required as a cofactor. In terms of tissue distribution, expressed in leaves. Expressed in roots and leaf blades. Expressed at low levels in leaf sheaths and shoot bases.

It catalyses the reaction S-adenosyl-L-methionine = 1-aminocyclopropane-1-carboxylate + S-methyl-5'-thioadenosine + H(+). Its pathway is alkene biosynthesis; ethylene biosynthesis via S-adenosyl-L-methionine; ethylene from S-adenosyl-L-methionine: step 1/2. In terms of biological role, catalyzes the formation of 1-aminocyclopropane-1-carboxylate, a direct precursor of ethylene in higher plants. This chain is 1-aminocyclopropane-1-carboxylate synthase 3, found in Oryza sativa subsp. japonica (Rice).